The following is a 412-amino-acid chain: Hyaluronidase-3 (412 aa).

The first 22 residues, 1–22 (MIMHLGLMMVVGLTLCLMHGQA), serve as a signal peptide directing secretion. 5 disulfides stabilise this stretch: cysteine 42–cysteine 332, cysteine 206–cysteine 221, cysteine 357–cysteine 368, cysteine 362–cysteine 396, and cysteine 398–cysteine 407. Asparagine 69 carries an N-linked (GlcNAc...) asparagine glycan. Residue glutamate 129 is the Proton donor of the active site. Asparagine 216 carries an N-linked (GlcNAc...) asparagine glycan. The 56-residue stretch at 353 to 408 (AAMACSHQRCHGHGRCARKDPGQMEAFLHLQPDDSLGAWNSFRCHCYSGWAGPTCL) folds into the EGF-like domain.

The protein belongs to the glycosyl hydrolase 56 family. In terms of processing, N-glycosylated. As to expression, expressed in testis, epididymal tissue, epididymal luminal fluid (ELF), acrosome-intact (AI) sperm and caput (CAP), corpus (COR) and caudal (CAU) sperm. Higher expression in sperm than testis (at protein level). Liver, kidney, skin, brain, stomach and testis. Expressed mainly in granulosa cells of the ovaries. Expressed in small and large antral follicles. Not present in theca or stroma cells. Expressed in testis and liver. Expressed in testis and CAP, COR, and CAU epididymis tissue.

It localises to the secreted. The protein resides in the cell membrane. Its subcellular location is the cytoplasmic vesicle. The protein localises to the secretory vesicle. It is found in the acrosome. It localises to the endoplasmic reticulum. The protein resides in the early endosome. It carries out the reaction Random hydrolysis of (1-&gt;4)-linkages between N-acetyl-beta-D-glucosamine and D-glucuronate residues in hyaluronate.. Facilitates sperm penetration into the layer of cumulus cells surrounding the egg by digesting hyaluronic acid. Involved in induction of the acrosome reaction in the sperm. Involved in follicular atresia, the breakdown of immature ovarian follicles that are not selected to ovulate. Induces ovarian granulosa cell apoptosis, possibly via apoptotic signaling pathway involving CASP8 and CASP3 activation, and poly(ADP-ribose) polymerase (PARP) cleavage. Has no hyaluronidase activity in embryonic fibroblasts in vitro. Has no hyaluronidase activity in granulosa cells in vitro. This Mus musculus (Mouse) protein is Hyaluronidase-3 (Hyal3).